A 511-amino-acid chain; its full sequence is Type 2 DNA topoisomerase 6 subunit B-like (511 aa).

The segment at 398–485 (DSAQGTEDAP…RALAPGRASL (88 aa)) is disordered. A compositionally biased stretch (polar residues) spans 408 to 422 (DNSSLELLADTSGQA). A compositionally biased stretch (low complexity) spans 440–451 (LRSARAPSPSEA). Over residues 466–475 (RGREHREAHG) the composition is skewed to basic and acidic residues.

It belongs to the TOP6B-like family. In terms of assembly, heterotetramer of SPO11 and 2 TOP6BL chains. Interacts with SPO11. In terms of tissue distribution, detected in lung, spleen,colon and in skeletal muscle. Expressed in the ovaries, Fallopian tubes and uterus.

It is found in the chromosome. Functionally, component of a topoisomerase 6 complex specifically required for meiotic recombination. Together with SPO11, mediates DNA cleavage that forms the double-strand breaks (DSB) that initiate meiotic recombination. The complex promotes relaxation of negative and positive supercoiled DNA and DNA decatenation through cleavage and ligation cycles. This is Type 2 DNA topoisomerase 6 subunit B-like from Homo sapiens (Human).